A 506-amino-acid polypeptide reads, in one-letter code: Ribose import ATP-binding protein RbsA 2 (506 aa).

ABC transporter domains lie at 6-241 (LSMT…VGRV) and 254-499 (EKSN…SITI). 38–45 (GENGAGKS) serves as a coordination point for ATP.

The protein belongs to the ABC transporter superfamily. Ribose importer (TC 3.A.1.2.1) family. As to quaternary structure, the complex is composed of an ATP-binding protein (RbsA), two transmembrane proteins (RbsC) and a solute-binding protein (RbsB).

It is found in the cell inner membrane. It carries out the reaction D-ribose(out) + ATP + H2O = D-ribose(in) + ADP + phosphate + H(+). Functionally, part of the ABC transporter complex RbsABC involved in ribose import. Responsible for energy coupling to the transport system. This chain is Ribose import ATP-binding protein RbsA 2, found in Agrobacterium fabrum (strain C58 / ATCC 33970) (Agrobacterium tumefaciens (strain C58)).